Here is a 510-residue protein sequence, read N- to C-terminus: MAPPKAASHRPAVRRKKSGTLVDSILDKYLNVRFFKYLLLEPAALPIVGLFVLLAELVINVVVIQRVPYTEIDWVAYMQECEGFLNGTTNYSLLRGDTGPLVYPAAFVYIYSALYYVTSHGTNVRLAQYIFAGIYLLQLALVLRLYSKSRKVPPYVLVLSAFTSYRIHSIYVLRLFNDPVAVLLLYAALNLFLDRRWTLGSTFFSLAVGVKMNILLFAPALLLFYLANLGLLRTILQLAVCGVIQLLLGAPFLLTHPVEYLRGSFDLGRIFEHKWTVNYRFLSRDVFENRTFHVSLLGLHLLLLLAFAKPIWTFFQSYVRLRRIEDQLQPQITQQNLQLKAQKRPKKVEKDKDKDQKKFTTEQQSFLKAFEKSLQKASGGKATPAPAQAEPERYGIHFDRCTQLALLPFFLCNLVGVACSRSLHYQFYVWYFHSLPYLAWSTPYSLGVRCLILGLIEYCWNTYPSTNFSSAALHFTHIILLAGVAKQLIQTMRINNAAKREQQEQQKKLQ.

At 1 to 43 (MAPPKAASHRPAVRRKKSGTLVDSILDKYLNVRFFKYLLLEPA) the chain is on the cytoplasmic side. The helical transmembrane segment at 44–64 (ALPIVGLFVLLAELVINVVVI) threads the bilayer. Topologically, residues 65–97 (QRVPYTEIDWVAYMQECEGFLNGTTNYSLLRGD) are lumenal. The helical transmembrane segment at 98–118 (TGPLVYPAAFVYIYSALYYVT) threads the bilayer. The Cytoplasmic portion of the chain corresponds to 119 to 125 (SHGTNVR). The helical transmembrane segment at 126–146 (LAQYIFAGIYLLQLALVLRLY) threads the bilayer. Over 147-171 (SKSRKVPPYVLVLSAFTSYRIHSIY) the chain is Lumenal. A helical transmembrane segment spans residues 172-192 (VLRLFNDPVAVLLLYAALNLF). Residues 193–211 (LDRRWTLGSTFFSLAVGVK) lie on the Cytoplasmic side of the membrane. Residues 212-232 (MNILLFAPALLLFYLANLGLL) form a helical membrane-spanning segment. Position 233 (arginine 233) is a topological domain, lumenal. Residues 234–254 (TILQLAVCGVIQLLLGAPFLL) traverse the membrane as a helical segment. The Cytoplasmic portion of the chain corresponds to 255 to 294 (THPVEYLRGSFDLGRIFEHKWTVNYRFLSRDVFENRTFHV). Residues 295-315 (SLLGLHLLLLLAFAKPIWTFF) traverse the membrane as a helical segment. The Lumenal portion of the chain corresponds to 316-403 (QSYVRLRRIE…YGIHFDRCTQ (88 aa)). Positions 337–358 (LQLKAQKRPKKVEKDKDKDQKK) are disordered. Residues 348 to 358 (VEKDKDKDQKK) are compositionally biased toward basic and acidic residues. Residues 404 to 424 (LALLPFFLCNLVGVACSRSLH) traverse the membrane as a helical segment. Topologically, residues 425–426 (YQ) are cytoplasmic. The helical transmembrane segment at 427–447 (FYVWYFHSLPYLAWSTPYSLG) threads the bilayer. Topologically, residues 448-464 (VRCLILGLIEYCWNTYP) are lumenal. Residues 465-485 (STNFSSAALHFTHIILLAGVA) form a helical membrane-spanning segment. Over 486-510 (KQLIQTMRINNAAKREQQEQQKKLQ) the chain is Cytoplasmic.

It belongs to the glycosyltransferase ALG3 family.

It is found in the endoplasmic reticulum membrane. It catalyses the reaction an alpha-D-Man-(1-&gt;2)-alpha-D-Man-(1-&gt;2)-alpha-D-Man-(1-&gt;3)-[alpha-D-Man-(1-&gt;6)]-beta-D-Man-(1-&gt;4)-beta-D-GlcNAc-(1-&gt;4)-alpha-D-GlcNAc-diphospho-di-trans,poly-cis-dolichol + a di-trans,poly-cis-dolichyl beta-D-mannosyl phosphate = an alpha-D-Man-(1-&gt;2)-alpha-D-Man-(1-&gt;2)-alpha-D-Man-(1-&gt;3)-[alpha-D-Man-(1-&gt;3)-alpha-D-Man-(1-&gt;6)]-beta-D-Man-(1-&gt;4)-beta-D-GlcNAc-(1-&gt;4)-alpha-D-GlcNAc-diphospho-di-trans,poly-cis-dolichol + a di-trans,poly-cis-dolichyl phosphate + H(+). The protein operates within protein modification; protein glycosylation. Probable alpha-1,3-mannosyltransferase involved in the N-glycosylation pathway. Involved in glycosylation of the TNF receptor grnd, regulating its ligand affinity. Required for normal epithelial growth and architecture. Suppressor of JNK-dependent intestinal stem cell proliferation. This is Dolichyl-P-Man:Man5GlcNAc2-PP-dolichol alpha-1,3-mannosyltransferase Alg3 from Drosophila melanogaster (Fruit fly).